The chain runs to 163 residues: Probable metallophosphoesterase MG207 (163 aa).

The Mn(2+) site is built by Asp-9, His-11, Asp-34, Asn-53, His-75, His-107, and His-109.

The protein belongs to the metallophosphoesterase superfamily. YfcE family. Mn(2+) is required as a cofactor.

This Mycoplasma genitalium (strain ATCC 33530 / DSM 19775 / NCTC 10195 / G37) (Mycoplasmoides genitalium) protein is Probable metallophosphoesterase MG207.